Reading from the N-terminus, the 361-residue chain is Mitogen-activated protein kinase 1 (361 aa).

The region spanning 28–316 (YINLAYIGEG…VEAALAHPYL (289 aa)) is the Protein kinase domain. Residues 34-42 (IGEGAYGMV) and Lys-57 each bind ATP. Asp-152 acts as the Proton acceptor in catalysis. Phosphothreonine is present on Thr-188. Positions 188-190 (TEY) match the TXY motif. Tyr-190 carries the phosphotyrosine modification.

Belongs to the protein kinase superfamily. CMGC Ser/Thr protein kinase family. MAP kinase subfamily. As to quaternary structure, interacts with CDK2AP2. The cofactor is Mg(2+). Post-translationally, dually phosphorylated on Thr-188 and Tyr-190, which activates the enzyme. In terms of tissue distribution, expressed in the central nervous system, kidney, liver, intestine and the hematopoietic system. Also found in heart, muscle, pancreas and lung.

The protein resides in the cytoplasm. Its subcellular location is the cytoskeleton. It is found in the microtubule organizing center. It localises to the centrosome. The protein localises to the spindle. It carries out the reaction L-seryl-[protein] + ATP = O-phospho-L-seryl-[protein] + ADP + H(+). The enzyme catalyses L-threonyl-[protein] + ATP = O-phospho-L-threonyl-[protein] + ADP + H(+). With respect to regulation, activated by tyrosine phosphorylation during the M phase of the meiotic cell cycle. Dephosphorylated and inactivated by DUSP1. Its function is as follows. Serine/threonine kinase which acts as an essential component of the MAP kinase signal transduction pathway. Plays an important role in the MAPK/ERK cascade. Depending on the cellular context, this cascade mediates diverse biological functions such as cell growth, adhesion, survival and differentiation through the regulation of transcription, translation, cytoskeletal rearrangements. The MAPK/ERK cascade also plays a role in initiation and regulation of meiosis, mitosis, and postmitotic functions in differentiated cells by phosphorylating a number of transcription factors. Many of the substrates are localized in the nucleus, and seem to participate in the regulation of transcription upon stimulation. However, other substrates are found in the cytosol as well as in other cellular organelles, and those are responsible for processes such as translation, mitosis and apoptosis. Moreover, the MAPK/ERK cascade is also involved in the regulation of the endosomal dynamics, including lysosome processing and endosome cycling through the perinuclear recycling compartment (PNRC); as well as in the fragmentation of the Golgi apparatus during mitosis. Phosphorylates microtubule-associated protein 2 (MAP2), myelin basic protein (MBP) and Elk-1. Phosphorylates dual specificity protein phosphatase 1 (DUSP1) during meiosis, increasing its stability. Activated by M phase promoting factor (MPF). Plays a role in the spindle assembly checkpoint. This is Mitogen-activated protein kinase 1 (mapk1) from Xenopus laevis (African clawed frog).